Reading from the N-terminus, the 202-residue chain is ATP-dependent Clp protease proteolytic subunit 2 (202 aa).

Ser-99 functions as the Nucleophile in the catalytic mechanism. His-124 is a catalytic residue.

It belongs to the peptidase S14 family. As to quaternary structure, fourteen ClpP subunits assemble into 2 heptameric rings which stack back to back to give a disk-like structure with a central cavity, resembling the structure of eukaryotic proteasomes.

It localises to the cytoplasm. It catalyses the reaction Hydrolysis of proteins to small peptides in the presence of ATP and magnesium. alpha-casein is the usual test substrate. In the absence of ATP, only oligopeptides shorter than five residues are hydrolyzed (such as succinyl-Leu-Tyr-|-NHMec, and Leu-Tyr-Leu-|-Tyr-Trp, in which cleavage of the -Tyr-|-Leu- and -Tyr-|-Trp bonds also occurs).. Its function is as follows. Cleaves peptides in various proteins in a process that requires ATP hydrolysis. Has a chymotrypsin-like activity. Plays a major role in the degradation of misfolded proteins. This chain is ATP-dependent Clp protease proteolytic subunit 2, found in Desulfitobacterium hafniense (strain Y51).